Here is a 317-residue protein sequence, read N- to C-terminus: tRNA(Met) cytidine acetate ligase (317 aa).

ATP contacts are provided by residues 6 to 19 (IAEY…HIYQ), Gly100, Asn157, and Arg182.

It belongs to the TmcAL family.

It is found in the cytoplasm. It catalyses the reaction cytidine(34) in elongator tRNA(Met) + acetate + ATP = N(4)-acetylcytidine(34) in elongator tRNA(Met) + AMP + diphosphate. In terms of biological role, catalyzes the formation of N(4)-acetylcytidine (ac(4)C) at the wobble position of elongator tRNA(Met), using acetate and ATP as substrates. First activates an acetate ion to form acetyladenylate (Ac-AMP) and then transfers the acetyl group to tRNA to form ac(4)C34. The sequence is that of tRNA(Met) cytidine acetate ligase from Mesomycoplasma hyopneumoniae (strain J / ATCC 25934 / NCTC 10110) (Mycoplasma hyopneumoniae).